A 342-amino-acid chain; its full sequence is uncharacterized protein (342 aa).

Belongs to the cycloisomerase 2 family.

This is an uncharacterized protein from Staphylococcus aureus (strain NCTC 8325 / PS 47).